Consider the following 178-residue polypeptide: Small ribosomal subunit protein uS5 (178 aa).

One can recognise an S5 DRBM domain in the interval 15-78 (FEEKIIEIRR…SAAKRNIIEV (64 aa)).

This sequence belongs to the universal ribosomal protein uS5 family. As to quaternary structure, part of the 30S ribosomal subunit. Contacts proteins S4 and S8.

With S4 and S12 plays an important role in translational accuracy. In terms of biological role, located at the back of the 30S subunit body where it stabilizes the conformation of the head with respect to the body. This is Small ribosomal subunit protein uS5 from Thermotoga sp. (strain RQ2).